The primary structure comprises 173 residues: MNFSIKATIRAWSAPEHKLACRKQLWRKIVAELERRGKRRHEAGTFLLGIERNGRKEVQSAVYYDDLDPSAYDSGVCILHGDAFAKLWSHCREKGLTVVADVHTHPGAGFQSDSDRTNPMVARQGHIAIILPNFARWPIRQGNLGIYEYCGQHEWLERSPAHAPNFFYTGFWS.

Zn(2+) is bound by residues His-103, His-105, and Asp-115.

Belongs to the M67B family. Requires Zn(2+) as cofactor.

Functionally, component of the Bil (bacterial ISG15-like) antiviral defense system, composed of BilA, BilB, BilC and BilD. The Bil system specifically conjugates a ubiquitin-like moiety (bilA) to the bacteriophage central tail fiber (CTF, or tip attachment protein J) via reactions involving E1 (bilD) and E2 (bilB). Modifies CTF of phage SECphi27 and SECphi4, which probably interferes with assembly of the phage tail. Also modifies T5 baseplate hub protein pb3 (gene D16), but not gp27 of phage T6 (Bil defends against T6). BilC is a probable metalloprotease that may cleave non-specifically conjugated targets. Bil-encoding bacteria produce mostly defective phage SECphi27, many of which have phage assembly defects, including no tails. SECphi27 phage progeny produced in E.coli with the Bil system inject less DNA into naive host cells, maybe because the phage are less able to adsorb and inject their DNA into host cells. Expression of the Bil system in E.coli (strain MG1655) confers about 100-fold resistance to phage SECphi27, SECphi18, SECphi6, SECphi4 and T5, but not to SECphi17. When cells expressing the Bil system are infected by phage SECphi27 at low multiplicity of infection (0.03 MOI) the culture survives, at 3.0 MOI the culture collapses at the same time as cells without the Bil system. Its function is as follows. Cleaves a ubiquitin-GFP (Ubl-GFP) fusion protein in vivo. The chain is Bacterial deubiquitinase-like protein BilC from Collimonas sp. (strain OK412).